A 289-amino-acid chain; its full sequence is Shikimate dehydrogenase (NADP(+)) (289 aa).

Shikimate-binding positions include 22-24 and Thr69; that span reads SRS. The Proton acceptor role is filled by Lys73. Residue Glu85 participates in NADP(+) binding. Positions 94 and 109 each coordinate shikimate. NADP(+)-binding positions include 134 to 138, 158 to 163, and Ile226; these read GAGGA and NRTLSR. Tyr228 lines the shikimate pocket. Gly249 provides a ligand contact to NADP(+).

It belongs to the shikimate dehydrogenase family. In terms of assembly, homodimer.

The enzyme catalyses shikimate + NADP(+) = 3-dehydroshikimate + NADPH + H(+). It participates in metabolic intermediate biosynthesis; chorismate biosynthesis; chorismate from D-erythrose 4-phosphate and phosphoenolpyruvate: step 4/7. Functionally, involved in the biosynthesis of the chorismate, which leads to the biosynthesis of aromatic amino acids. Catalyzes the reversible NADPH linked reduction of 3-dehydroshikimate (DHSA) to yield shikimate (SA). The chain is Shikimate dehydrogenase (NADP(+)) from Brucella melitensis biotype 2 (strain ATCC 23457).